A 208-amino-acid chain; its full sequence is High frequency lysogenization protein HflD homolog (208 aa).

The protein belongs to the HflD family.

Its subcellular location is the cytoplasm. The protein localises to the cell inner membrane. The polypeptide is High frequency lysogenization protein HflD homolog (Yersinia enterocolitica serotype O:8 / biotype 1B (strain NCTC 13174 / 8081)).